We begin with the raw amino-acid sequence, 159 residues long: Putative ribosomal RNA large subunit methyltransferase H (159 aa).

Residues Leu76, Gly108, and 127-132 (FSKMTF) each bind S-adenosyl-L-methionine.

This sequence belongs to the RNA methyltransferase RlmH family.

Its subcellular location is the cytoplasm. The catalysed reaction is pseudouridine(1915) in 23S rRNA + S-adenosyl-L-methionine = N(3)-methylpseudouridine(1915) in 23S rRNA + S-adenosyl-L-homocysteine + H(+). Functionally, specifically methylates the pseudouridine at position 1915 (m3Psi1915) in 23S rRNA. The sequence is that of Putative ribosomal RNA large subunit methyltransferase H from Methanococcus maripaludis (strain C6 / ATCC BAA-1332).